A 406-amino-acid polypeptide reads, in one-letter code: Probable endo-xylogalacturonan hydrolase A (406 aa).

A signal peptide spans 1–18; sequence MLYPRNLALFSLLSLSSA. PbH1 repeat units lie at residues 183–213, 214–235, 237–257, and 299–320; these read TQHV…DIGA, STHV…AFKP, SNYV…SVGS, and VKNV…QIES. Residue Asp228 is the Proton donor of the active site. Residue His251 is part of the active site. An N-linked (GlcNAc...) asparagine glycan is attached at Asn301.

The protein belongs to the glycosyl hydrolase 28 family.

It is found in the secreted. Functionally, pectinolytic enzyme involved in the degradation of xylogalacturonan (xga), a galacturonan backbone heavily substituted with xylose, and which is one important component of the hairy regions of pectin. Activity requires a galacturonic acid backbone substituted with xylose. The sequence is that of Probable endo-xylogalacturonan hydrolase A (xghA) from Aspergillus fumigatus (strain CBS 144.89 / FGSC A1163 / CEA10) (Neosartorya fumigata).